A 396-amino-acid chain; its full sequence is Elongation factor Tu (396 aa).

The tr-type G domain maps to 10-206; the sequence is KPHVNIGTIG…AVDESVPDPV (197 aa). Residues 19 to 26 are G1; that stretch reads GHVDHGKT. 19–26 lines the GTP pocket; the sequence is GHVDHGKT. Residue Thr-26 coordinates Mg(2+). The G2 stretch occupies residues 62-66; that stretch reads GITIN. A G3 region spans residues 83–86; it reads DAPG. GTP contacts are provided by residues 83-87 and 138-141; these read DAPGH and NKAD. The tract at residues 138–141 is G4; that stretch reads NKAD. The G5 stretch occupies residues 176-178; it reads SGL.

The protein belongs to the TRAFAC class translation factor GTPase superfamily. Classic translation factor GTPase family. EF-Tu/EF-1A subfamily. Monomer.

It is found in the cytoplasm. It carries out the reaction GTP + H2O = GDP + phosphate + H(+). In terms of biological role, GTP hydrolase that promotes the GTP-dependent binding of aminoacyl-tRNA to the A-site of ribosomes during protein biosynthesis. The sequence is that of Elongation factor Tu from Arthrobacter sp. (strain FB24).